Consider the following 100-residue polypeptide: Small ribosomal subunit protein uS14c (100 aa).

This sequence belongs to the universal ribosomal protein uS14 family. As to quaternary structure, part of the 30S ribosomal subunit.

It is found in the plastid. The protein localises to the chloroplast. In terms of biological role, binds 16S rRNA, required for the assembly of 30S particles. This is Small ribosomal subunit protein uS14c from Aethionema cordifolium (Lebanon stonecress).